The primary structure comprises 1110 residues: ATP-dependent DNA helicase MPH1 (1110 aa).

Over residues 24 to 34 (LNEVSDSQTGR) the composition is skewed to polar residues. Disordered regions lie at residues 24 to 165 (LNEV…TNGK), 178 to 212 (FEEE…PVTN), and 236 to 305 (TETA…PTHH). Basic and acidic residues-rich tracts occupy residues 42–57 (NSHE…REIE) and 178–188 (FEEEQSARGDA). Residues 189-199 (EMLDDSIEEPG) are compositionally biased toward acidic residues. Polar residues-rich tracts occupy residues 246 to 273 (ISSQ…QTTL) and 287 to 300 (QPAT…SRNE). The Helicase ATP-binding domain maps to 331–499 (IAHRALFHNL…EVIDGLSISR (169 aa)). An ATP-binding site is contributed by 344-351 (LPTGLGKT). A DEAH box motif is present at residues 447–450 (DEAH). Positions 675-846 (ILNHFLDAGG…RFTFHTDKSS (172 aa)) constitute a Helicase C-terminal domain. Disordered stretches follow at residues 867-937 (ENSQ…PDLG), 1013-1055 (VGDP…RCGT), and 1069-1110 (NLAW…DVFE). The segment covering 879-890 (RSRAPKRPPKKF) has biased composition (basic residues). Composition is skewed to basic and acidic residues over residues 891–900 (HMPDGVEKGF), 1041–1055 (QSRE…RCGT), and 1077–1093 (EAPR…DQKP).

This sequence belongs to the DEAD box helicase family. DEAH subfamily. FANCM sub-subfamily. In terms of assembly, interacts with the MHF histone-fold complex to form the FANCM-MHF complex.

Its subcellular location is the nucleus. It carries out the reaction ATP + H2O = ADP + phosphate + H(+). Its function is as follows. ATP-dependent DNA helicase involved in DNA damage repair by homologous recombination and in genome maintenance. Capable of unwinding D-loops. Plays a role in limiting crossover recombinants during mitotic DNA double-strand break (DSB) repair. Component of a FANCM-MHF complex which promotes gene conversion at blocked replication forks, probably by reversal of the stalled fork. This is ATP-dependent DNA helicase MPH1 from Coccidioides immitis (strain RS) (Valley fever fungus).